Consider the following 718-residue polypeptide: NF-kappa-B inhibitor zeta (718 aa).

The segment covering 1–17 (MIVDKLLDDSRGGEGLR) has biased composition (basic and acidic residues). 2 disordered regions span residues 1–20 (MIVDKLLDDSRGGEGLRDAA) and 58–108 (SAPG…RQQR). The segment covering 58 to 83 (SAPGSPGSDSSDFSSASSVSSCGAVE) has biased composition (low complexity). The span at 84-97 (SRSRGGARAERQPV) shows a compositional bias: basic and acidic residues. Residues 108–130 (RGPFQGVRVKNSVKELLLHIRSH) enclose the OCA domain. The Nuclear localization signal motif lies at 164 to 179 (KRKGPDSLSDGPACKR). The interval 186-211 (QFLTPPQTPTPGESMEDVHLNEPKQE) is disordered. Over residues 201–211 (EDVHLNEPKQE) the composition is skewed to basic and acidic residues. The tract at residues 321 to 394 (AYEPNLFDGP…MVGHEMASDS (74 aa)) is required for transcriptional activity. Residues 404–718 (MGNPMNTTQL…KSIQQRAPPY (315 aa)) form an interaction with NFKB1/p50 region. ANK repeat units lie at residues 443 to 472 (DGDTFLHIAVAQGRRALSYVLARKMNALHM), 479 to 508 (NGQSAFQVAVAANQHLIVQDLVNIGAQVNT), 512 to 541 (WGRTPLHVCAEKGHSQVLQAIQKGAVGSNQ), 551 to 580 (DGLTPLHCAVIAHNAVVHELQRNQQPHSPE), 582 to 607 (QELLLKNKSLVDTIKCLIQMGAAVEA), 612 to 641 (SGRTALHLAAEEANLELIRLFLELPSCLSF), and 648 to 681 (NGNTALHVAASLQYRLTQLDAVRLLMRKGADPST).

In terms of assembly, interacts with NFKB1/p50. Interacts with RELA. Interacts with AKIRIN2. As to expression, expressed at high levels in peripheral blood leukocytes and lung, at moderate levels in liver, placenta, and at low levels in spleen, kidney, skeletal muscle and heart.

The protein resides in the nucleus. Involved in regulation of NF-kappa-B transcription factor complexes. Inhibits NF-kappa-B activity without affecting its nuclear translocation upon stimulation. Inhibits DNA-binding of RELA and NFKB1/p50, and of the NF-kappa-B p65-p50 heterodimer and the NF-kappa-B p50-p50 homodimer. Also seems to activate NF-kappa-B-mediated transcription. In vitro, upon association with NFKB1/p50 has transcriptional activation activity and, together with NFKB1/p50 and RELA, is recruited to LCN2 promoters. Promotes transcription of LCN2 and DEFB4. Is recruited to IL-6 promoters and activates IL-6 but decreases TNF-alpha production in response to LPS. Seems to be involved in the induction of inflammatory genes activated through TLR/IL-1 receptor signaling. Involved in the induction of T helper 17 cells (Th17) differentiation upon recognition of antigen by T cell antigen receptor (TCR). The sequence is that of NF-kappa-B inhibitor zeta (NFKBIZ) from Homo sapiens (Human).